A 231-amino-acid chain; its full sequence is Ribonuclease HII (231 aa).

The 192-residue stretch at glycine 23 to leucine 214 folds into the RNase H type-2 domain. Residues aspartate 29, glutamate 30, and aspartate 123 each contribute to the a divalent metal cation site.

This sequence belongs to the RNase HII family. Requires Mn(2+) as cofactor. The cofactor is Mg(2+).

It is found in the cytoplasm. It catalyses the reaction Endonucleolytic cleavage to 5'-phosphomonoester.. Its function is as follows. Endonuclease that specifically degrades the RNA of RNA-DNA hybrids. The polypeptide is Ribonuclease HII (Corynebacterium efficiens (strain DSM 44549 / YS-314 / AJ 12310 / JCM 11189 / NBRC 100395)).